A 542-amino-acid chain; its full sequence is DM7 family protein GG17591 (542 aa).

The segment covering 415 to 430 (GETQEMDEAHPTKEES) has biased composition (basic and acidic residues). Residues 415 to 443 (GETQEMDEAHPTKEESKSEEEGEVQSGSQ) form a disordered region.

This sequence belongs to the DM7 family.

The chain is DM7 family protein GG17591 from Drosophila erecta (Fruit fly).